A 138-amino-acid polypeptide reads, in one-letter code: uncharacterized protein (138 aa).

Disordered regions lie at residues Met1 to Glu23 and Ala35 to Val83. The segment covering Asp60 to Asp69 has biased composition (acidic residues).

This is an uncharacterized protein from Schizosaccharomyces pombe (strain 972 / ATCC 24843) (Fission yeast).